A 184-amino-acid polypeptide reads, in one-letter code: Large ribosomal subunit protein uL5 (184 aa).

Belongs to the universal ribosomal protein uL5 family. Part of the 50S ribosomal subunit; part of the 5S rRNA/L5/L18/L25 subcomplex. Contacts the 5S rRNA and the P site tRNA. Forms a bridge to the 30S subunit in the 70S ribosome.

Its function is as follows. This is one of the proteins that bind and probably mediate the attachment of the 5S RNA into the large ribosomal subunit, where it forms part of the central protuberance. In the 70S ribosome it contacts protein S13 of the 30S subunit (bridge B1b), connecting the 2 subunits; this bridge is implicated in subunit movement. Contacts the P site tRNA; the 5S rRNA and some of its associated proteins might help stabilize positioning of ribosome-bound tRNAs. This chain is Large ribosomal subunit protein uL5, found in Ureaplasma parvum serovar 3 (strain ATCC 27815 / 27 / NCTC 11736).